Reading from the N-terminus, the 95-residue chain is Hge-scorpine (95 aa).

The signal sequence occupies residues 1–19 (MNTKLTVLCFLGIVTIVSC). A BetaSPN-type CS-alpha/beta domain is found at 55-94 (QFGCFANVDVKGDCKRHCKAEDKEGICHGTKCKCGVPISY). Cystine bridges form between Cys58/Cys81, Cys68/Cys86, and Cys72/Cys88.

Belongs to the long chain scorpion toxin family. Class 3 subfamily. As to expression, expressed by the venom gland.

The protein localises to the secreted. Has antibacterial activity against B.subtilis, but not against S.aureus. Also has hemolytic and cytolytic activities. Since cell lysis occurs at the tested concentrations, observation of activity on potassium channels is impossible. Its function is as follows. Blocks Kv1.1/KCNA1 (IC(50)=185 nM) potassium channels. Shows a weak hemolytic activity. The chain is Hge-scorpine from Hoffmannihadrurus gertschi (Scorpion).